Here is a 53-residue protein sequence, read N- to C-terminus: UPF0391 membrane protein azo1750 (53 aa).

Transmembrane regions (helical) follow at residues 6 to 26 (VIFLIIAIIAAVFGFGGIAAG) and 30 to 50 (IAKILFYLFLVIFLVSLVLGM).

The protein belongs to the UPF0391 family.

Its subcellular location is the cell membrane. This Azoarcus sp. (strain BH72) protein is UPF0391 membrane protein azo1750.